A 490-amino-acid chain; its full sequence is 2-succinylbenzoate--CoA ligase (490 aa).

This sequence belongs to the ATP-dependent AMP-binding enzyme family. MenE subfamily.

It catalyses the reaction 2-succinylbenzoate + ATP + CoA = 2-succinylbenzoyl-CoA + AMP + diphosphate. The protein operates within quinol/quinone metabolism; 1,4-dihydroxy-2-naphthoate biosynthesis; 1,4-dihydroxy-2-naphthoate from chorismate: step 5/7. It functions in the pathway quinol/quinone metabolism; menaquinone biosynthesis. In terms of biological role, converts 2-succinylbenzoate (OSB) to 2-succinylbenzoyl-CoA (OSB-CoA). The protein is 2-succinylbenzoate--CoA ligase of Geobacillus kaustophilus (strain HTA426).